The following is a 539-amino-acid chain: Glucans biosynthesis protein D (539 aa).

A signal peptide (tat-type signal) is located at residues 1 to 31 (MHRRNLLKASMALAAYTGLSASGLLAARAWA).

It belongs to the OpgD/OpgG family. Post-translationally, predicted to be exported by the Tat system. The position of the signal peptide cleavage has not been experimentally proven.

The protein localises to the periplasm. It functions in the pathway glycan metabolism; osmoregulated periplasmic glucan (OPG) biosynthesis. In terms of biological role, probably involved in the control of the structural glucose backbone of osmoregulated periplasmic glucans (OPGs). The protein is Glucans biosynthesis protein D of Pseudomonas fluorescens (strain ATCC BAA-477 / NRRL B-23932 / Pf-5).